The primary structure comprises 875 residues: Phosphoenolpyruvate carboxylase (875 aa).

Active-site residues include His-137 and Lys-542.

The protein belongs to the PEPCase type 1 family. Requires Mg(2+) as cofactor.

It carries out the reaction oxaloacetate + phosphate = phosphoenolpyruvate + hydrogencarbonate. Forms oxaloacetate, a four-carbon dicarboxylic acid source for the tricarboxylic acid cycle. This Pseudomonas putida (strain ATCC 47054 / DSM 6125 / CFBP 8728 / NCIMB 11950 / KT2440) protein is Phosphoenolpyruvate carboxylase.